Reading from the N-terminus, the 406-residue chain is ATP synthase subunit a (406 aa).

2 stretches are compositionally biased toward low complexity: residues 22 to 31 and 43 to 59; these read AGEHGAPAPE and DAAGAATDPHGAAAEHG. Residues 22 to 76 are disordered; it reads AGEHGAPAPEVATPAEGHGARDAAGAATDPHGAAAEHGAAAHEDPAQHGAAGAEA. 6 consecutive transmembrane segments (helical) span residues 151-171, 209-229, 232-252, 278-298, 304-324, and 351-371; these read KHVVMMWIASAILLLVVFAAV, FVPYLVSAFFFILFLNLFGLV, AATATANISVTVMMAVFTFLI, LWPLWFIMIPVEFLGLFTKPF, LFANMVAGHFVILALLGLIFA, and VQAYIFTMLSSLFIGSVVAHH. A disordered region spans residues 375 to 406; the sequence is DEHEEHGHGAAATGGAHGSHGSHVAGASPGHG. A compositionally biased stretch (low complexity) spans 383 to 406; sequence GAAATGGAHGSHGSHVAGASPGHG.

This sequence belongs to the ATPase A chain family. As to quaternary structure, F-type ATPases have 2 components, CF(1) - the catalytic core - and CF(0) - the membrane proton channel. CF(1) has five subunits: alpha(3), beta(3), gamma(1), delta(1), epsilon(1). CF(0) has three main subunits: a(1), b(2) and c(9-12). The alpha and beta chains form an alternating ring which encloses part of the gamma chain. CF(1) is attached to CF(0) by a central stalk formed by the gamma and epsilon chains, while a peripheral stalk is formed by the delta and b chains.

It is found in the cell inner membrane. Functionally, key component of the proton channel; it plays a direct role in the translocation of protons across the membrane. The sequence is that of ATP synthase subunit a from Anaeromyxobacter sp. (strain Fw109-5).